Consider the following 1114-residue polypeptide: Mediator of RNA polymerase II transcription subunit 14 (1114 aa).

Disordered regions lie at residues 1–27, 40–79, and 120–141; these read MPGV…QDGL, ANAQ…GPPE, and HGIH…SPGN. The span at 126 to 140 shows a compositional bias: polar residues; the sequence is TAPTTGKSPGNQSPG.

This sequence belongs to the Mediator complex subunit 14 family. As to quaternary structure, component of the Mediator complex.

It localises to the nucleus. Functionally, component of the Mediator complex, a coactivator involved in the regulated transcription of nearly all RNA polymerase II-dependent genes. Mediator functions as a bridge to convey information from gene-specific regulatory proteins to the basal RNA polymerase II transcription machinery. Mediator is recruited to promoters by direct interactions with regulatory proteins and serves as a scaffold for the assembly of a functional preinitiation complex with RNA polymerase II and the general transcription factors. This is Mediator of RNA polymerase II transcription subunit 14 (rgr1) from Aspergillus niger (strain ATCC MYA-4892 / CBS 513.88 / FGSC A1513).